Consider the following 526-residue polypeptide: Bifunctional purine biosynthesis protein PurH (526 aa).

Positions 1 to 147 (MTKIERALIS…KNWAHVAIVT (147 aa)) constitute an MGS-like domain.

The protein belongs to the PurH family.

It carries out the reaction (6R)-10-formyltetrahydrofolate + 5-amino-1-(5-phospho-beta-D-ribosyl)imidazole-4-carboxamide = 5-formamido-1-(5-phospho-D-ribosyl)imidazole-4-carboxamide + (6S)-5,6,7,8-tetrahydrofolate. The catalysed reaction is IMP + H2O = 5-formamido-1-(5-phospho-D-ribosyl)imidazole-4-carboxamide. Its pathway is purine metabolism; IMP biosynthesis via de novo pathway; 5-formamido-1-(5-phospho-D-ribosyl)imidazole-4-carboxamide from 5-amino-1-(5-phospho-D-ribosyl)imidazole-4-carboxamide (10-formyl THF route): step 1/1. It functions in the pathway purine metabolism; IMP biosynthesis via de novo pathway; IMP from 5-formamido-1-(5-phospho-D-ribosyl)imidazole-4-carboxamide: step 1/1. This Laribacter hongkongensis (strain HLHK9) protein is Bifunctional purine biosynthesis protein PurH.